The sequence spans 936 residues: Protein translocase subunit SecA (936 aa).

ATP contacts are provided by residues glutamine 87, 105–109, and aspartate 515; that span reads GEGKT. 4 residues coordinate Zn(2+): cysteine 920, cysteine 922, cysteine 931, and histidine 932.

Belongs to the SecA family. As to quaternary structure, monomer and homodimer. Part of the essential Sec protein translocation apparatus which comprises SecA, SecYEG and auxiliary proteins SecDF-YajC and YidC. Requires Zn(2+) as cofactor.

It localises to the cell inner membrane. The protein localises to the cytoplasm. It carries out the reaction ATP + H2O + cellular proteinSide 1 = ADP + phosphate + cellular proteinSide 2.. In terms of biological role, part of the Sec protein translocase complex. Interacts with the SecYEG preprotein conducting channel. Has a central role in coupling the hydrolysis of ATP to the transfer of proteins into and across the cell membrane, serving both as a receptor for the preprotein-SecB complex and as an ATP-driven molecular motor driving the stepwise translocation of polypeptide chains across the membrane. This Paraburkholderia xenovorans (strain LB400) protein is Protein translocase subunit SecA.